The chain runs to 33 residues: Imperacalcin (33 aa).

Disulfide bonds link cysteine 3–cysteine 17, cysteine 10–cysteine 21, and cysteine 16–cysteine 32. 2 important for stimulation of [3H]ryanodine binding to RYR1 regions span residues 8–9 (KR) and 19–20 (KK). The tract at residues 22–24 (KRR) is essential for stimulation of [3H]ryanodine binding to RYR1. The interval 25–27 (GTN) is important for stimulation of [3H]ryanodine binding to RYR1.

Belongs to the scorpion calcin family. As to expression, expressed by the venom gland.

The protein resides in the secreted. Functionally, this toxin affects the activity of ryanodine receptors 1, 2 and 3 (RyR1, RyR2 and RyR3). At lower concentrations the toxin increases full openings of the RyRs, and at higher concentrations it inhibits full openings and induces openings to subconductance levels (30% of the full conductance state) and reduces the number of full conductance openings. The different actions may be attributed to the toxins binding at different sites on the RyRs, with binding at a high-affinity site mediating the increase in full openings and the induction of subconductance states evoked upon binding to a lower-affinity site. Furthermore, it triggers calcium release from sarcoplasmic vesicles (11.7 nM are enough to induce a sharp release, and 70% of the total calcium is released after toxin (100 nM) addition) probably by acting as a cell-penetrating peptide (CPP). In addition, it has been shown to dose-dependently stimulate ryanodine binding to RyR1 (EC(50)=8.7 nM). It also augments the bell-shaped calcium-[3H]ryanodine binding curve that is maximal at about 10 uM calcium concentration. It binds a different site as ryanodine. It acts synergistically with caffeine. In vivo, intracerebroventricular injection into mice induces neurotoxic symptoms, followed by death. This chain is Imperacalcin, found in Pandinus imperator (Emperor scorpion).